Consider the following 181-residue polypeptide: HGPRTase-like protein 2 (181 aa).

Belongs to the purine/pyrimidine phosphoribosyltransferase family. Archaeal HPRT subfamily.

May catalyze a purine salvage reaction, the substrate is unknown. This Haloquadratum walsbyi (strain DSM 16854 / JCM 12705 / C23) protein is HGPRTase-like protein 2.